A 149-amino-acid chain; its full sequence is MADQLTEEQIAEFKEAFSLFDKDGDGTITTKELGTVMRSLGQNPTEAELQDMINEVDADGNGTIDFPEFLTMMARKMKDTDSEEEIREAFRVFDKDGNGYISAAELRYVMTNLGEKLTDEXVDEMIREADIDGDGQVNYEEFVQMMTAK.

An N-acetylalanine modification is found at alanine 2. EF-hand domains are found at residues 8–43 (EQIA…LGQN), 44–79 (PTEA…KMKD), 81–116 (DSEE…LGEK), and 117–149 (LTDE…MTAK). Ca(2+)-binding residues include aspartate 21, aspartate 23, aspartate 25, threonine 27, glutamate 32, aspartate 57, aspartate 59, asparagine 61, threonine 63, glutamate 68, aspartate 94, aspartate 96, asparagine 98, tyrosine 100, and glutamate 105. Lysine 116 carries the post-translational modification N6,N6,N6-trimethyllysine. Ca(2+) is bound by residues aspartate 130, aspartate 132, aspartate 134, glutamine 136, and glutamate 141.

It belongs to the calmodulin family.

In terms of biological role, calmodulin acts as part of a calcium signal transduction pathway by mediating the control of a large number of enzymes, ion channels, aquaporins and other proteins through calcium-binding. Calcium-binding is required for the activation of calmodulin. Among the enzymes to be stimulated by the calmodulin-calcium complex are a number of protein kinases, such as myosin light-chain kinases and calmodulin-dependent protein kinase type II (CaMK2), and phosphatases. The polypeptide is Calmodulin (calm) (Oreochromis mossambicus (Mozambique tilapia)).